Reading from the N-terminus, the 391-residue chain is Tryptophan synthase beta chain (391 aa).

At Lys84 the chain carries N6-(pyridoxal phosphate)lysine.

It belongs to the TrpB family. As to quaternary structure, tetramer of two alpha and two beta chains. The cofactor is pyridoxal 5'-phosphate.

It carries out the reaction (1S,2R)-1-C-(indol-3-yl)glycerol 3-phosphate + L-serine = D-glyceraldehyde 3-phosphate + L-tryptophan + H2O. It functions in the pathway amino-acid biosynthesis; L-tryptophan biosynthesis; L-tryptophan from chorismate: step 5/5. Its function is as follows. The beta subunit is responsible for the synthesis of L-tryptophan from indole and L-serine. The sequence is that of Tryptophan synthase beta chain from Thermoanaerobacter sp. (strain X514).